The sequence spans 222 residues: Protein GrpE (222 aa).

The interval Met-1–Pro-21 is disordered.

It belongs to the GrpE family. In terms of assembly, homodimer.

The protein resides in the cytoplasm. Participates actively in the response to hyperosmotic and heat shock by preventing the aggregation of stress-denatured proteins, in association with DnaK and GrpE. It is the nucleotide exchange factor for DnaK and may function as a thermosensor. Unfolded proteins bind initially to DnaJ; upon interaction with the DnaJ-bound protein, DnaK hydrolyzes its bound ATP, resulting in the formation of a stable complex. GrpE releases ADP from DnaK; ATP binding to DnaK triggers the release of the substrate protein, thus completing the reaction cycle. Several rounds of ATP-dependent interactions between DnaJ, DnaK and GrpE are required for fully efficient folding. The polypeptide is Protein GrpE (Bartonella tribocorum (strain CIP 105476 / IBS 506)).